The primary structure comprises 91 residues: Potassium channel toxin MeuTXK-beta-1 (91 aa).

The signal sequence occupies residues 1 to 19 (MQRNLVVLLFLGMVALSSC). A BetaSPN-type CS-alpha/beta domain is found at 54 to 91 (QFGCPAYQGYCDDHCQDIEKKEGFCHGFKCKCGIPMGF). 3 disulfide bridges follow: cysteine 57/cysteine 78, cysteine 64/cysteine 83, and cysteine 68/cysteine 85.

In terms of tissue distribution, expressed by the venom gland.

The protein localises to the secreted. In terms of biological role, has a low affinity binding to potassium channels of rat brain synaptosomes. Displays weak antibacterial activity against Stenotrophomonas sp. Strongly inhibits the development of the Plasmodium berghei ookinetes. Displays slight hemolytic effect on mouse erythrocytes. Induces cytolysis on Xenopus oocytes at high concentrations. Is not toxic towards mice and towards the insect Tenebrio molitor. This Mesobuthus eupeus (Lesser Asian scorpion) protein is Potassium channel toxin MeuTXK-beta-1.